Consider the following 689-residue polypeptide: DNA topoisomerase 1 (689 aa).

The Toprim domain occupies 3 to 113; that stretch reads DNLVIVESPA…KENRVVFNEI (111 aa). Mg(2+) contacts are provided by Glu-9 and Asp-82. Residues 129 to 557 form the Topo IA-type catalytic domain; that stretch reads EMNLVDAQQA…FFSSFKQDVE (429 aa). The tract at residues 163–168 is interaction with DNA; that stretch reads SAGRVQ. Tyr-298 functions as the O-(5'-phospho-DNA)-tyrosine intermediate in the catalytic mechanism. A disordered region spans residues 328 to 357; sequence SKRKASGKQGDQDAHEAIRPSSTMRTPDDM. 3 C4-type zinc fingers span residues 577 to 603, 617 to 645, and 658 to 681; these read CEVC…FPDC, CPKC…YPEC, and CPKC…CSNC.

The protein belongs to the type IA topoisomerase family. As to quaternary structure, monomer. Mg(2+) is required as a cofactor.

It catalyses the reaction ATP-independent breakage of single-stranded DNA, followed by passage and rejoining.. Functionally, releases the supercoiling and torsional tension of DNA, which is introduced during the DNA replication and transcription, by transiently cleaving and rejoining one strand of the DNA duplex. Introduces a single-strand break via transesterification at a target site in duplex DNA. The scissile phosphodiester is attacked by the catalytic tyrosine of the enzyme, resulting in the formation of a DNA-(5'-phosphotyrosyl)-enzyme intermediate and the expulsion of a 3'-OH DNA strand. The free DNA strand then undergoes passage around the unbroken strand, thus removing DNA supercoils. Finally, in the religation step, the DNA 3'-OH attacks the covalent intermediate to expel the active-site tyrosine and restore the DNA phosphodiester backbone. This chain is DNA topoisomerase 1, found in Staphylococcus aureus.